The following is a 264-amino-acid chain: Synaptophysin-like protein 2 (264 aa).

Topologically, residues 1 to 33 (MSSTESPSRAADKSPRQQVDRLLEGLRWRRLEE) are cytoplasmic. The 209-residue stretch at 30-238 (RLEEPLGFIK…NCWFVFKETP (209 aa)) folds into the MARVEL domain. Residues 34 to 54 (PLGFIKVLQWLFAIFAFGSCG) form a helical membrane-spanning segment. Over 55–116 (SYSGETGAMV…LMGDFSAPAE (62 aa)) the chain is Vesicular. The chain crosses the membrane as a helical span at residues 117 to 137 (FFVTLGIFSFFYTMAALVVYL). Residues 138–150 (RFHKLYTENKRFP) lie on the Cytoplasmic side of the membrane. A helical transmembrane segment spans residues 151–171 (LVDFCVTVSFTFFWLVAAAAW). At 172–213 (GKGLTDVKGATRPSSLTAAMSVCHGEEAVCSAGATPSMGLAN) the chain is on the vesicular side. The N-linked (GlcNAc...) asparagine glycan is linked to asparagine 213. The helical transmembrane segment at 214-234 (ISVLFGFINFFLWAGNCWFVF) threads the bilayer. The Cytoplasmic segment spans residues 235-264 (KETPWHGQGQDQGQGPSQESAAEQGAVEKQ). A disordered region spans residues 242–264 (QGQDQGQGPSQESAAEQGAVEKQ).

Belongs to the synaptophysin/synaptobrevin family. Skeletal muscle.

Its subcellular location is the membrane. Functionally, involved in communication between the T-tubular and junctional sarcoplasmic reticulum (SR) membranes. The protein is Synaptophysin-like protein 2 (SYPL2) of Oryctolagus cuniculus (Rabbit).